The primary structure comprises 267 residues: Putative ABC transporter permease protein MJ0413 (267 aa).

7 helical membrane passes run 18 to 38 (VLKISLPALAVVIWELLAIYI), 48 to 68 (EAVINVLIHPFQGILGTGSLI), 78 to 98 (VISGFLLASAVAIPLGILMGY), 115 to 135 (PIPPLAWVPLSLAWFGLGEMS), 136 to 156 (MIFIIFIGAFFPILINTISGV), 188 to 208 (PSILTGLRVGAGIAWMCVVAA), and 228 to 248 (LSRMDVVIACMIIIGLIGLVL). The ABC transmembrane type-1 domain maps to 71-252 (TIISIKRVIS…LIGLVLDRGL (182 aa)).

Belongs to the binding-protein-dependent transport system permease family. CysTW subfamily.

The protein localises to the cell membrane. In terms of biological role, probably part of a binding-protein-dependent transport system. Probably responsible for the translocation of the substrate across the membrane. This is Putative ABC transporter permease protein MJ0413 from Methanocaldococcus jannaschii (strain ATCC 43067 / DSM 2661 / JAL-1 / JCM 10045 / NBRC 100440) (Methanococcus jannaschii).